The primary structure comprises 383 residues: 8-amino-7-oxononanoate synthase (383 aa).

Arg-23 serves as a coordination point for substrate. 110 to 111 is a pyridoxal 5'-phosphate binding site; the sequence is GF. A substrate-binding site is contributed by His-135. Pyridoxal 5'-phosphate is bound by residues Ser-181, His-209, and Thr-235. Lys-238 bears the N6-(pyridoxal phosphate)lysine mark. Thr-351 contributes to the substrate binding site.

Belongs to the class-II pyridoxal-phosphate-dependent aminotransferase family. BioF subfamily. In terms of assembly, homodimer. It depends on pyridoxal 5'-phosphate as a cofactor.

The enzyme catalyses 6-carboxyhexanoyl-[ACP] + L-alanine + H(+) = (8S)-8-amino-7-oxononanoate + holo-[ACP] + CO2. The protein operates within cofactor biosynthesis; biotin biosynthesis. Its function is as follows. Catalyzes the decarboxylative condensation of pimeloyl-[acyl-carrier protein] and L-alanine to produce 8-amino-7-oxononanoate (AON), [acyl-carrier protein], and carbon dioxide. The protein is 8-amino-7-oxononanoate synthase of Aliivibrio fischeri (strain MJ11) (Vibrio fischeri).